A 381-amino-acid polypeptide reads, in one-letter code: Ceramide-binding protein svf-1 (381 aa).

The interval 1-18 (MFKWAQAALANVAGTKEP) is peripherally associates with membranes.

Belongs to the SVF1 family.

Its subcellular location is the golgi apparatus. It is found in the cis-Golgi network membrane. It localises to the endoplasmic reticulum membrane. The protein resides in the cytoplasm. The protein localises to the nucleus. In terms of biological role, ceramide-binding protein that may transfer ceramides from the endoplasmic reticulum membrane to the cis-Golgi network membrane, and is thereby required for the biosynthesis of complex sphingolipids. In Neurospora crassa (strain ATCC 24698 / 74-OR23-1A / CBS 708.71 / DSM 1257 / FGSC 987), this protein is Ceramide-binding protein svf-1 (svf-1).